The primary structure comprises 130 residues: Small ribosomal subunit protein uS17m (130 aa).

The transit peptide at methionine 1–threonine 20 directs the protein to the mitochondrion.

It belongs to the universal ribosomal protein uS17 family. Component of the mitochondrial small ribosomal subunit (mt-SSU). Mature mammalian 55S mitochondrial ribosomes consist of a small (28S) and a large (39S) subunit. The 28S small subunit contains a 12S ribosomal RNA (12S mt-rRNA) and 30 different proteins. The 39S large subunit contains a 16S rRNA (16S mt-rRNA), a copy of mitochondrial valine transfer RNA (mt-tRNA(Val)), which plays an integral structural role, and 52 different proteins.

Its subcellular location is the mitochondrion. The polypeptide is Small ribosomal subunit protein uS17m (MRPS17) (Homo sapiens (Human)).